A 687-amino-acid chain; its full sequence is Glycine--tRNA ligase beta subunit (687 aa).

Belongs to the class-II aminoacyl-tRNA synthetase family. As to quaternary structure, tetramer of two alpha and two beta subunits.

It localises to the cytoplasm. The catalysed reaction is tRNA(Gly) + glycine + ATP = glycyl-tRNA(Gly) + AMP + diphosphate. This chain is Glycine--tRNA ligase beta subunit, found in Trichlorobacter lovleyi (strain ATCC BAA-1151 / DSM 17278 / SZ) (Geobacter lovleyi).